A 287-amino-acid chain; its full sequence is Toxin zeta (287 aa).

ATP is bound at residue 40–47 (GQPGSGKT). N66 contributes to the substrate binding site. D67 functions as the Proton acceptor in the catalytic mechanism. E100, T118, R120, and T128 together coordinate substrate. Residues 267–287 (KLESLQPPTPPIPKTPKLPGI) form a disordered region. A compositionally biased stretch (pro residues) spans 273-287 (PPTPPIPKTPKLPGI).

It belongs to the zeta toxin family. As to quaternary structure, in the presence of the epsilon antitoxin forms an inactive PezA(2)PezT(2) heterotetramer. The heterotetramer is still able to bind the UNAG substrate.

It catalyses the reaction UDP-N-acetyl-alpha-D-glucosamine + ATP = UDP-N-acetyl-alpha-D-glucosamine 3'-phosphate + ADP + H(+). Functionally, toxic component of a type II toxin-antitoxin (TA) system. Phosphorylates UDP-N-acetyl-D-glucosamine (UNAG) on the 3'-hydroxyl group of the N-acetyl-D-glucosamine moiety, yielding UNAG-3P. UNAG-3P inhibits MurA, the first committed step in cell wall synthesis, which is then blocked. Phosphorylation is inhibited by cognate epsilon antitoxin. Part of a postsegregational killing (PSK) system involved in the killing of plasmid-free cells. The zeta toxin induces programmed cell death. The protein is Toxin zeta of Streptococcus pyogenes.